A 603-amino-acid chain; its full sequence is Protein SHORT-ROOT 2 (603 aa).

2 disordered regions span residues 11–58 and 106–140; these read HHHH…HSHS and DFSS…SSAG. Over residues 31 to 44 the composition is skewed to low complexity; sequence SYPSSRGSTSSPSS. A compositionally biased stretch (basic residues) spans 45 to 58; the sequence is HHTHNHTYYHHSHS. Over residues 108-125 the composition is skewed to low complexity; it reads SSSSSSRQFHSGTGAPSS. The GRAS domain maps to 179-602; the sequence is AAPSSSGRWA…QPVVWASAWK (424 aa). The interval 186 to 249 is leucine repeat I (LRI); the sequence is RWAAQLLMEC…LTTSGPRTLR (64 aa). Residues 268 to 354 are VHIID; that stretch reads ALKFQELSPW…DTPHLSITTV (87 aa). The VHIID signature appears at 318–322; sequence LHILD. Residues 370-406 form a leucine repeat II (LRII) region; that stretch reads EIGQRLEKFARLMGVPFSFRAVHHSGDLADLDLAALD. The PFYRE stretch occupies residues 416–514; that stretch reads LAVNCVNALR…ERAVGRAIVD (99 aa). The tract at residues 517-602 is SAW; it reads SCPASQSAER…QPVVWASAWK (86 aa).

It belongs to the GRAS family. As to quaternary structure, does not interact with SCR1.

The protein localises to the nucleus. In terms of biological role, putative transcription factor involved in asymmetric cell division. The chain is Protein SHORT-ROOT 2 (SHR2) from Oryza sativa subsp. japonica (Rice).